We begin with the raw amino-acid sequence, 74 residues long: Mitotic-spindle organizing protein 1 (74 aa).

It belongs to the MOZART1 family. As to quaternary structure, part of the gamma-tubulin complex.

It localises to the cytoplasm. The protein resides in the cytoskeleton. It is found in the microtubule organizing center. Its subcellular location is the spindle pole body. Functionally, required for gamma-tubulin complex recruitment to the microtubule organizing center (MTOC). The chain is Mitotic-spindle organizing protein 1 from Emericella nidulans (strain FGSC A4 / ATCC 38163 / CBS 112.46 / NRRL 194 / M139) (Aspergillus nidulans).